Reading from the N-terminus, the 89-residue chain is Small ribosomal subunit protein uS14A (89 aa).

It belongs to the universal ribosomal protein uS14 family. Part of the 30S ribosomal subunit. Contacts proteins S3 and S10.

Its function is as follows. Binds 16S rRNA, required for the assembly of 30S particles and may also be responsible for determining the conformation of the 16S rRNA at the A site. This chain is Small ribosomal subunit protein uS14A, found in Listeria monocytogenes serotype 4b (strain F2365).